The following is a 292-amino-acid chain: Acetylglutamate kinase (292 aa).

Residues 64-65, R86, and N190 contribute to the substrate site; that span reads GG.

The protein belongs to the acetylglutamate kinase family. ArgB subfamily.

The protein resides in the cytoplasm. It catalyses the reaction N-acetyl-L-glutamate + ATP = N-acetyl-L-glutamyl 5-phosphate + ADP. The protein operates within amino-acid biosynthesis; L-arginine biosynthesis; N(2)-acetyl-L-ornithine from L-glutamate: step 2/4. Catalyzes the ATP-dependent phosphorylation of N-acetyl-L-glutamate. The sequence is that of Acetylglutamate kinase from Citrifermentans bemidjiense (strain ATCC BAA-1014 / DSM 16622 / JCM 12645 / Bem) (Geobacter bemidjiensis).